We begin with the raw amino-acid sequence, 250 residues long: Triosephosphate isomerase (250 aa).

9–11 (NWK) provides a ligand contact to substrate. The active-site Electrophile is His95. The Proton acceptor role is filled by Glu167. Residues Gly173, Ser213, and 234 to 235 (GG) each bind substrate.

Belongs to the triosephosphate isomerase family. Homodimer.

The protein localises to the cytoplasm. The enzyme catalyses D-glyceraldehyde 3-phosphate = dihydroxyacetone phosphate. Its pathway is carbohydrate biosynthesis; gluconeogenesis. It functions in the pathway carbohydrate degradation; glycolysis; D-glyceraldehyde 3-phosphate from glycerone phosphate: step 1/1. Its function is as follows. Involved in the gluconeogenesis. Catalyzes stereospecifically the conversion of dihydroxyacetone phosphate (DHAP) to D-glyceraldehyde-3-phosphate (G3P). This chain is Triosephosphate isomerase, found in Chloroflexus aurantiacus (strain ATCC 29366 / DSM 635 / J-10-fl).